The following is a 532-amino-acid chain: Metal-staphylopine-binding protein CntA (532 aa).

An N-terminal signal peptide occupies residues 1–20 (MRKLTKMSAMLLASGLILTG). A lipid anchor (N-palmitoyl cysteine) is attached at Cys-21. Cys-21 is lipidated: S-diacylglycerol cysteine. The staphylopine site is built by Arg-165, Arg-418, and Asn-448.

The protein belongs to the bacterial solute-binding protein 5 family. In terms of assembly, the complex is composed of two ATP-binding proteins (CntD and CntF), two transmembrane proteins (CntB and CntC) and a solute-binding protein (CntA).

The protein resides in the cell membrane. Its activity is regulated as follows. Nickel/cobalt import is reduced in the presence of zinc. Functionally, part of the ABC transporter complex CntABCDF (Opp1) involved in the uptake of metal in complex with the metallophore staphylopine (StP). Involved in the import of divalent metals ions such as nickel, cobalt and zinc. Binds the metal via the metallophore StP, and transfers the StP-metal complex to the membrane-bound permease. Binds one molecule of StP/metal. Binds StP/Co(2+) and StP/Ni(2+) tighter than StP/Zn(2+). Plays a major role in nickel/cobalt import in zinc-depleted conditions. Contributes to virulence. Required for full urease activity in vitro. The sequence is that of Metal-staphylopine-binding protein CntA from Staphylococcus aureus (strain NCTC 8325 / PS 47).